We begin with the raw amino-acid sequence, 225 residues long: UPF0758 protein NMCC_1157 (225 aa).

The region spanning 102–224 (VLSDPDTVAD…VRSFRQLGLM (123 aa)) is the MPN domain. Residues H173, H175, and D186 each coordinate Zn(2+). The JAMM motif signature appears at 173–186 (HNHPGGSPEPSQED).

This sequence belongs to the UPF0758 family.

This Neisseria meningitidis serogroup C (strain 053442) protein is UPF0758 protein NMCC_1157.